We begin with the raw amino-acid sequence, 1350 residues long: ABC transporter G family member 45 (1350 aa).

Positions 1–23 (MAAAVELTGDGGTTAETRWLSPP) are disordered. An ABC transporter 1 domain is found at 85 to 357 (AACAHMCTTR…FETMGFKCPS (273 aa)). 118–125 (GAPGSGKT) lines the ATP pocket. In terms of domain architecture, ABC transmembrane type-2 1 spans 434–647 (NIFKACFSRE…AQNAVALNEF (214 aa)). 6 consecutive transmembrane segments (helical) span residues 453–473 (VHIF…TLFL), 491–511 (ALFM…AMTI), 523–543 (ILAL…LPIS), 557–577 (VIGY…LFAM), 597–617 (MANM…GFVI), and 683–703 (ICVS…IFAL). One can recognise an ABC transporter 2 domain in the interval 749-1001 (LVFDHINYFV…NMIKYFEAIP (253 aa)). Position 794–801 (794–801 (GITGAGKT)) interacts with ATP. The ABC transmembrane type-2 2 domain maps to 1074–1288 (AQCMACLWKQ…TVYGLMFSQL (215 aa)). The next 7 helical transmembrane spans lie at 1099–1119 (INTF…GSTI), 1126–1146 (FNIL…NCSI), 1181–1201 (LPYM…MIGF), 1208–1228 (FFWF…YGMM), 1238–1258 (IAAG…GFII), 1269–1289 (WVYW…SQLG), and 1322–1342 (LVTS…FLSI).

This sequence belongs to the ABC transporter superfamily. ABCG family. PDR (TC 3.A.1.205) subfamily.

It is found in the membrane. Its function is as follows. May be a general defense protein. The chain is ABC transporter G family member 45 from Oryza sativa subsp. japonica (Rice).